Consider the following 160-residue polypeptide: Transcriptional repressor NrdR (160 aa).

The segment at 3-34 is a zinc-finger region; that stretch reads CPYCQYEDTQVKDSRPAEEGAVIRRRRVCSVC. An ATP-cone domain is found at 49 to 139; it reads LLITKKNGRC…VYRDFRNASD (91 aa).

The protein belongs to the NrdR family. Zn(2+) serves as cofactor.

Functionally, negatively regulates transcription of bacterial ribonucleotide reductase nrd genes and operons by binding to NrdR-boxes. The chain is Transcriptional repressor NrdR from Bartonella tribocorum (strain CIP 105476 / IBS 506).